We begin with the raw amino-acid sequence, 406 residues long: Phosphopentomutase (406 aa).

6 residues coordinate Mn(2+): aspartate 10, aspartate 305, histidine 310, aspartate 346, histidine 347, and histidine 358.

Belongs to the phosphopentomutase family. Mn(2+) is required as a cofactor.

Its subcellular location is the cytoplasm. The enzyme catalyses 2-deoxy-alpha-D-ribose 1-phosphate = 2-deoxy-D-ribose 5-phosphate. The catalysed reaction is alpha-D-ribose 1-phosphate = D-ribose 5-phosphate. It functions in the pathway carbohydrate degradation; 2-deoxy-D-ribose 1-phosphate degradation; D-glyceraldehyde 3-phosphate and acetaldehyde from 2-deoxy-alpha-D-ribose 1-phosphate: step 1/2. In terms of biological role, isomerase that catalyzes the conversion of deoxy-ribose 1-phosphate (dRib-1-P) and ribose 1-phosphate (Rib-1-P) to deoxy-ribose 5-phosphate (dRib-5-P) and ribose 5-phosphate (Rib-5-P), respectively. The polypeptide is Phosphopentomutase (Vibrio vulnificus (strain CMCP6)).